The sequence spans 194 residues: A-type ATP synthase subunit E (194 aa).

The interval 35–56 is disordered; sequence DAEADADQIREEREAEVERTIE. A compositionally biased stretch (basic and acidic residues) spans 41–56; it reads DQIREEREAEVERTIE.

It belongs to the V-ATPase E subunit family. In terms of assembly, has multiple subunits with at least A(3), B(3), C, D, E, F, H, I and proteolipid K(x).

The protein localises to the cell membrane. Its function is as follows. Component of the A-type ATP synthase that produces ATP from ADP in the presence of a proton gradient across the membrane. The polypeptide is A-type ATP synthase subunit E (Haloarcula marismortui (strain ATCC 43049 / DSM 3752 / JCM 8966 / VKM B-1809) (Halobacterium marismortui)).